The primary structure comprises 315 residues: Cytochrome bo(3) ubiquinol oxidase subunit 2 (315 aa).

A signal peptide spans 1-24; the sequence is MRLRKYNKSLGWLSLFAGTVLLSG. The N-palmitoyl cysteine moiety is linked to residue Cys-25. Cys-25 carries S-diacylglycerol cysteine lipidation. Topologically, residues 25-50 are periplasmic; that stretch reads CNSALLDPKGQIGLEQRSLILTAFGL. A helical membrane pass occupies residues 51-68; sequence MLIVVIPAILMAVGFAWK. Residues 69–92 are Cytoplasmic-facing; sequence YRASNKDAKYSPNWSHSNKVEAVV. Residues 93–111 traverse the membrane as a helical segment; the sequence is WTVPILIIIFLAVLTWKTT. Residues 112 to 315 lie on the Periplasmic side of the membrane; that stretch reads HALEPSKPLA…MDMSHAESAH (204 aa). Residues 288 to 315 form a disordered region; sequence MDMTQPEGEHSAHEGMEGMDMSHAESAH. Residues 294-315 show a composition bias toward basic and acidic residues; sequence EGEHSAHEGMEGMDMSHAESAH.

Belongs to the cytochrome c oxidase subunit 2 family. As to quaternary structure, heterooctamer of two A chains, two B chains, two C chains and two D chains.

Its subcellular location is the cell inner membrane. Cytochrome bo(3) ubiquinol terminal oxidase is the component of the aerobic respiratory chain of E.coli that predominates when cells are grown at high aeration. Has proton pump activity across the membrane in addition to electron transfer, pumping 2 protons/electron. The sequence is that of Cytochrome bo(3) ubiquinol oxidase subunit 2 (cyoA) from Escherichia coli O6:H1 (strain CFT073 / ATCC 700928 / UPEC).